A 297-amino-acid chain; its full sequence is Heme A synthase (297 aa).

At 1 to 6 the chain is on the cytoplasmic side; the sequence is MHKRLK. Residues 7 to 27 traverse the membrane as a helical segment; the sequence is IYSVITSIGVLIVLLQGALVT. Residues 28 to 62 are Extracellular-facing; sequence KTGSGEGCGATWPLCFGEVIPTNPAIETIIEYSHR. Cysteines 35 and 42 form a disulfide. E58 is a catalytic residue. H61 lines the heme o pocket. A helical membrane pass occupies residues 63 to 83; sequence IVSGLVGAMIIILAIWAWKQL. At 84–93 the chain is on the cytoplasmic side; the sequence is KHMREAKALS. The chain crosses the membrane as a helical span at residues 94–114; it reads FAAVILIIFQGLLGAGAVVFG. The Extracellular portion of the chain corresponds to 115–118; sequence QSKA. The helical transmembrane segment at 119–139 threads the bilayer; sequence ILALHFGISAMSLAAVVLLTI. Heme o is bound at residue H123. At 140-156 the chain is on the cytoplasmic side; the sequence is LAFEDGREHTMAPKVSR. A helical membrane pass occupies residues 157 to 177; it reads GFKYYVFFVITYCYAVIYSGA. At 178-210 the chain is on the extracellular side; it reads YVKHSEATLACAGFPLCNGQIFPGLYGPVGAHY. C188 and C194 form a disulfide bridge. Residues 211–231 form a helical membrane-spanning segment; the sequence is FHRVVGTILLLFLLILMIWTL. Heme b is bound at residue H212. Residues 232–242 lie on the Cytoplasmic side of the membrane; sequence SRYRHYRVLTW. The helical transmembrane segment at 243 to 263 threads the bilayer; sequence TAVLSFLLVVGQFISGISIVF. The Extracellular segment spans residues 264–271; it reads TQNALSVG. The chain crosses the membrane as a helical span at residues 272-292; it reads LIHALIISILFSALSYMTMII. H274 is a heme b binding site. The Cytoplasmic portion of the chain corresponds to 293–297; sequence TRPSH.

It belongs to the COX15/CtaA family. Type 1 subfamily. As to quaternary structure, interacts with CtaB. The cofactor is heme b.

The protein localises to the cell membrane. The enzyme catalyses Fe(II)-heme o + 2 A + H2O = Fe(II)-heme a + 2 AH2. The protein operates within porphyrin-containing compound metabolism; heme A biosynthesis; heme A from heme O: step 1/1. Catalyzes the conversion of heme O to heme A by two successive hydroxylations of the methyl group at C8. The first hydroxylation forms heme I, the second hydroxylation results in an unstable dihydroxymethyl group, which spontaneously dehydrates, resulting in the formyl group of heme A. This Alkalihalophilus pseudofirmus (strain ATCC BAA-2126 / JCM 17055 / OF4) (Bacillus pseudofirmus) protein is Heme A synthase.